Here is a 98-residue protein sequence, read N- to C-terminus: C-X-C motif chemokine 10 (98 aa).

An N-terminal signal peptide occupies residues 1 to 21 (MNQTAILICCLIFLTLSGIQG). Arg-26 carries the citrulline; by PAD2 modification. Cystine bridges form between Cys-30-Cys-57 and Cys-32-Cys-74.

It belongs to the intercrine alpha (chemokine CxC) family. Monomer, dimer, and tetramer. Interacts with CXCR3 (via N-terminus). In terms of processing, several proteases can mediate post-secretion cleavages. DPP4 cleaves CXCL10 on its N-terminal 2 amino acids leading to an antagonist form of CXCL10. This dominant negative form is capable of binding CXCR3 but does not induce signaling. MMP9 cleaves 9 amino acids instead. As to expression, mainly secreted by monocytes, endothelial cells as well as fibroblasts. Expressed by epithelial cells in thymus. Microglial cells produce CXCL10 in response to viral stimulation.

The protein localises to the secreted. In terms of biological role, pro-inflammatory cytokine that is involved in a wide variety of processes such as chemotaxis, differentiation, and activation of peripheral immune cells, regulation of cell growth, apoptosis and modulation of angiostatic effects. Plays thereby an important role during viral infections by stimulating the activation and migration of immune cells to the infected sites. Mechanistically, binding of CXCL10 to the CXCR3 receptor activates G protein-mediated signaling and results in downstream activation of phospholipase C-dependent pathway, an increase in intracellular calcium production and actin reorganization. In turn, recruitment of activated Th1 lymphocytes occurs at sites of inflammation. Activation of the CXCL10/CXCR3 axis also plays an important role in neurons in response to brain injury for activating microglia, the resident macrophage population of the central nervous system, and directing them to the lesion site. This recruitment is an essential element for neuronal reorganization. In Homo sapiens (Human), this protein is C-X-C motif chemokine 10 (CXCL10).